We begin with the raw amino-acid sequence, 212 residues long: Pyridoxine/pyridoxamine 5'-phosphate oxidase (212 aa).

Residues 8 to 11 and Lys-66 each bind substrate; that span reads RREY. FMN is bound by residues 61–66, 76–77, Arg-82, Lys-83, and Gln-105; these read RIVLLK and FT. Substrate contacts are provided by Tyr-123, Arg-127, and Ser-131. FMN is bound by residues 140–141 and Trp-185; that span reads QS. Residue 191-193 participates in substrate binding; sequence RLH. FMN is bound at residue Arg-195.

It belongs to the pyridoxamine 5'-phosphate oxidase family. As to quaternary structure, homodimer. FMN serves as cofactor.

It carries out the reaction pyridoxamine 5'-phosphate + O2 + H2O = pyridoxal 5'-phosphate + H2O2 + NH4(+). The catalysed reaction is pyridoxine 5'-phosphate + O2 = pyridoxal 5'-phosphate + H2O2. Its pathway is cofactor metabolism; pyridoxal 5'-phosphate salvage; pyridoxal 5'-phosphate from pyridoxamine 5'-phosphate: step 1/1. It functions in the pathway cofactor metabolism; pyridoxal 5'-phosphate salvage; pyridoxal 5'-phosphate from pyridoxine 5'-phosphate: step 1/1. In terms of biological role, catalyzes the oxidation of either pyridoxine 5'-phosphate (PNP) or pyridoxamine 5'-phosphate (PMP) into pyridoxal 5'-phosphate (PLP). In Shewanella sp. (strain MR-4), this protein is Pyridoxine/pyridoxamine 5'-phosphate oxidase.